The chain runs to 429 residues: S-adenosylmethionine synthase (429 aa).

Position 14 (His14) interacts with ATP. Position 16 (Asp16) interacts with Mg(2+). Glu42 lines the K(+) pocket. Positions 55 and 98 each coordinate L-methionine. The interval Gln98 to Arg108 is flexible loop. ATP-binding positions include Asp165 to Lys167, Lys252 to Phe253, Asp261, Arg267 to Lys268, Ala284, and Lys288. Asp261 contacts L-methionine. Lys292 is an L-methionine binding site.

Belongs to the AdoMet synthase family. Homotetramer; dimer of dimers. Mg(2+) serves as cofactor. K(+) is required as a cofactor.

The protein resides in the cytoplasm. The catalysed reaction is L-methionine + ATP + H2O = S-adenosyl-L-methionine + phosphate + diphosphate. It participates in amino-acid biosynthesis; S-adenosyl-L-methionine biosynthesis; S-adenosyl-L-methionine from L-methionine: step 1/1. Its function is as follows. Catalyzes the formation of S-adenosylmethionine (AdoMet) from methionine and ATP. The overall synthetic reaction is composed of two sequential steps, AdoMet formation and the subsequent tripolyphosphate hydrolysis which occurs prior to release of AdoMet from the enzyme. The protein is S-adenosylmethionine synthase of Porphyromonas gingivalis (strain ATCC 33277 / DSM 20709 / CIP 103683 / JCM 12257 / NCTC 11834 / 2561).